We begin with the raw amino-acid sequence, 194 residues long: Peptidyl-tRNA hydrolase (194 aa).

Tyr-16 is a tRNA binding site. His-21 functions as the Proton acceptor in the catalytic mechanism. 3 residues coordinate tRNA: Phe-67, Asn-69, and Asn-115.

It belongs to the PTH family. In terms of assembly, monomer.

The protein localises to the cytoplasm. It catalyses the reaction an N-acyl-L-alpha-aminoacyl-tRNA + H2O = an N-acyl-L-amino acid + a tRNA + H(+). Functionally, hydrolyzes ribosome-free peptidyl-tRNAs (with 1 or more amino acids incorporated), which drop off the ribosome during protein synthesis, or as a result of ribosome stalling. Catalyzes the release of premature peptidyl moieties from peptidyl-tRNA molecules trapped in stalled 50S ribosomal subunits, and thus maintains levels of free tRNAs and 50S ribosomes. The sequence is that of Peptidyl-tRNA hydrolase from Escherichia coli O17:K52:H18 (strain UMN026 / ExPEC).